A 613-amino-acid polypeptide reads, in one-letter code: DBH-like monooxygenase protein 1 (613 aa).

An N-terminal signal peptide occupies residues 1–19 (MCCWPLLLLWGLLPGTAAG). The Lumenal segment spans residues 20–592 (GSGRTYPHRT…TSSSSSLHRD (573 aa)). A DOMON domain is found at 35–148 (GKYWLGWSQR…STVRVIWAYH (114 aa)). N-linked (GlcNAc...) asparagine glycosylation occurs at N114. Y203 is an active-site residue. Cystine bridges form between C205–C257 and C242–C269. Residues H235 and H236 each contribute to the Cu cation site. An N-linked (GlcNAc...) asparagine glycan is attached at N247. Cu cation contacts are provided by H307, H389, H391, and M464. Disulfide bonds link C364–C480, C368–C550, and C443–C465. Residue H389 is part of the active site. Residues N476 and N517 are each glycosylated (N-linked (GlcNAc...) asparagine). A helical membrane pass occupies residues 593–613 (FSINLLVCLLLLSCTLSTKSL).

The protein belongs to the copper type II ascorbate-dependent monooxygenase family. The cofactor is Cu(2+). In terms of processing, N-glycosylated. Highly expressed in lung, kidney, brain and spinal cord.

The protein localises to the endoplasmic reticulum membrane. The polypeptide is DBH-like monooxygenase protein 1 (MOXD1) (Homo sapiens (Human)).